A 1037-amino-acid polypeptide reads, in one-letter code: Probable inorganic carbon transporter subunit DabA 1 (1037 aa).

The Zn(2+) site is built by Cys-460, Asp-462, His-719, and Cys-734.

This sequence belongs to the inorganic carbon transporter (TC 9.A.2) DabA family. As to quaternary structure, forms a complex with DabB. Zn(2+) serves as cofactor.

It localises to the cell inner membrane. Functionally, part of an energy-coupled inorganic carbon pump. The sequence is that of Probable inorganic carbon transporter subunit DabA 1 from Nitrobacter winogradskyi (strain ATCC 25391 / DSM 10237 / CIP 104748 / NCIMB 11846 / Nb-255).